Reading from the N-terminus, the 197-residue chain is Holliday junction branch migration complex subunit RuvA (197 aa).

Residues methionine 1 to valine 63 are domain I. The segment at aspartate 64–threonine 139 is domain II. The tract at residues threonine 139–valine 143 is flexible linker. The domain III stretch occupies residues asparagine 144–arginine 197.

This sequence belongs to the RuvA family. In terms of assembly, homotetramer. Forms an RuvA(8)-RuvB(12)-Holliday junction (HJ) complex. HJ DNA is sandwiched between 2 RuvA tetramers; dsDNA enters through RuvA and exits via RuvB. An RuvB hexamer assembles on each DNA strand where it exits the tetramer. Each RuvB hexamer is contacted by two RuvA subunits (via domain III) on 2 adjacent RuvB subunits; this complex drives branch migration. In the full resolvosome a probable DNA-RuvA(4)-RuvB(12)-RuvC(2) complex forms which resolves the HJ.

It localises to the cytoplasm. The RuvA-RuvB-RuvC complex processes Holliday junction (HJ) DNA during genetic recombination and DNA repair, while the RuvA-RuvB complex plays an important role in the rescue of blocked DNA replication forks via replication fork reversal (RFR). RuvA specifically binds to HJ cruciform DNA, conferring on it an open structure. The RuvB hexamer acts as an ATP-dependent pump, pulling dsDNA into and through the RuvAB complex. HJ branch migration allows RuvC to scan DNA until it finds its consensus sequence, where it cleaves and resolves the cruciform DNA. The polypeptide is Holliday junction branch migration complex subunit RuvA (Mycobacterium marinum (strain ATCC BAA-535 / M)).